The chain runs to 192 residues: Ribose 1,5-bisphosphate phosphokinase PhnN (192 aa).

The protein belongs to the ribose 1,5-bisphosphokinase family.

The enzyme catalyses alpha-D-ribose 1,5-bisphosphate + ATP = 5-phospho-alpha-D-ribose 1-diphosphate + ADP. It participates in metabolic intermediate biosynthesis; 5-phospho-alpha-D-ribose 1-diphosphate biosynthesis; 5-phospho-alpha-D-ribose 1-diphosphate from D-ribose 5-phosphate (route II): step 3/3. Its function is as follows. Catalyzes the phosphorylation of ribose 1,5-bisphosphate to 5-phospho-D-ribosyl alpha-1-diphosphate (PRPP). In Achromobacter xylosoxidans (strain A8), this protein is Ribose 1,5-bisphosphate phosphokinase PhnN.